A 797-amino-acid polypeptide reads, in one-letter code: Xaa-Pro dipeptidyl-peptidase (797 aa).

Active-site charge relay system residues include S370, D490, and H521.

This sequence belongs to the peptidase S15 family. Homodimer.

Its subcellular location is the cytoplasm. It carries out the reaction Hydrolyzes Xaa-Pro-|- bonds to release unblocked, N-terminal dipeptides from substrates including Ala-Pro-|-p-nitroanilide and (sequentially) Tyr-Pro-|-Phe-Pro-|-Gly-Pro-|-Ile.. In terms of biological role, removes N-terminal dipeptides sequentially from polypeptides having unsubstituted N-termini provided that the penultimate residue is proline. This Lacticaseibacillus rhamnosus (Lactobacillus rhamnosus) protein is Xaa-Pro dipeptidyl-peptidase.